The chain runs to 577 residues: Torulene dioxygenase (577 aa).

The Fe(2+) site is built by H239, H291, H361, and H570.

It belongs to the carotenoid oxygenase family. Fe(2+) serves as cofactor.

It is found in the cytoplasm. The protein localises to the cytosol. The catalysed reaction is torulene + O2 = 4'-apo-beta-carotenal + 3-methyl-2-butenal. It participates in carotenoid biosynthesis. Functionally, torulene dioxygenase; part of the pathway that mediates the biosynthesis of neurosporaxanthin, a carboxylic apocarotenoid acting as an essential protective pigments and leading to orange pigmentation. CarT mediates the cleavage of torulene into beta-apo-4'-carotenal, the aldehyde corresponding to the acidic neurosporaxanthin. Is also active on other monocyclic synthetic substrates such as beta-apo-8'-carotenal and beta-apo-10'-carotenal to produce beta-apo-14'-carotenal and retinal(beta-apo-15'-carotenal), respectively. Neurosporaxanthin is synthesized from geranyl-geranyl pyrophosphate (GGPP) through several enzymatic activities. Phytoene synthase activity performed by the bifunctional enzyme carAR first produces phytoene from geranyl-geranyl pyrophosphate (GGPP). The phytoene dehydrogenase carB then introduces 4 desaturations to lead to lycopene which is substrate of the carotene cyclase activity of carAR that leads to the production of gamma-carotene. CarB then performs a 5th desaturation reaction to yield torulene. Torulene is the substrate of the dioxidase carT that breaks the molecule, removing five carbon atoms to yield beta-apo-4'-carotenal, whereas the aldehyde dehydrogenase carD mediates the last step by converting beta-apo-4'-carotenal into neurosporaxanthin. This chain is Torulene dioxygenase, found in Fusarium fujikuroi (Bakanae and foot rot disease fungus).